We begin with the raw amino-acid sequence, 95 residues long: Pyruvate dehydrogenase inhibitor (95 aa).

It belongs to the HesB/IscA family. Interacts with the E1 module of pyruvate dehydrogenase (PdhA-PdhB).

Functionally, acts as an inhibitor of the pyruvate dehydrogenase. Overexpression does not affect growth with glucose as the main carbon source, but it leads to a dramatic growth defect when cells are grown with pyruvate as the sole carbon source. In Bacillus subtilis (strain 168), this protein is Pyruvate dehydrogenase inhibitor.